A 303-amino-acid polypeptide reads, in one-letter code: Probable RuBisCO transcriptional regulator (303 aa).

Residues 6 to 63 enclose the HTH lysR-type domain; the sequence is FTLDQLRIFQAIVVEGSFQKAAQSLYISQPAVSLQIQNLEQQLNAPLFDRSHRKAKLT. The H-T-H motif DNA-binding region spans 23–42; the sequence is FQKAAQSLYISQPAVSLQIQ.

The protein belongs to the LysR transcriptional regulatory family.

The protein localises to the plastid. It localises to the chloroplast. Its function is as follows. Trans-acting transcriptional regulator of RuBisCO genes (rbcL and rbcS) expression. In Cyanidioschyzon merolae (strain NIES-3377 / 10D) (Unicellular red alga), this protein is Probable RuBisCO transcriptional regulator (rbcR).